A 663-amino-acid chain; its full sequence is UvrABC system protein B (663 aa).

The Helicase ATP-binding domain maps to 30-417 (DGIKAGKRHQ…TDKMVEQIIR (388 aa)). 43–50 (GATGTGKT) is an ATP binding site. A Beta-hairpin motif is present at residues 96–119 (YYDYYQPEAYVPSTDTFIEKDASI). The 167-residue stretch at 434–600 (QIDDLLSEIQ…TINKKIHDLI (167 aa)) folds into the Helicase C-terminal domain. Residues 627–662 (QKTIDNIEKEMKQAAKDLDFEKATELRDMLFELKAE) form the UVR domain.

This sequence belongs to the UvrB family. Forms a heterotetramer with UvrA during the search for lesions. Interacts with UvrC in an incision complex.

The protein resides in the cytoplasm. Functionally, the UvrABC repair system catalyzes the recognition and processing of DNA lesions. A damage recognition complex composed of 2 UvrA and 2 UvrB subunits scans DNA for abnormalities. Upon binding of the UvrA(2)B(2) complex to a putative damaged site, the DNA wraps around one UvrB monomer. DNA wrap is dependent on ATP binding by UvrB and probably causes local melting of the DNA helix, facilitating insertion of UvrB beta-hairpin between the DNA strands. Then UvrB probes one DNA strand for the presence of a lesion. If a lesion is found the UvrA subunits dissociate and the UvrB-DNA preincision complex is formed. This complex is subsequently bound by UvrC and the second UvrB is released. If no lesion is found, the DNA wraps around the other UvrB subunit that will check the other stand for damage. The sequence is that of UvrABC system protein B from Staphylococcus aureus (strain Mu50 / ATCC 700699).